Reading from the N-terminus, the 95-residue chain is Aspartyl/glutamyl-tRNA(Asn/Gln) amidotransferase subunit C (95 aa).

This sequence belongs to the GatC family. Heterotrimer of A, B and C subunits.

The enzyme catalyses L-glutamyl-tRNA(Gln) + L-glutamine + ATP + H2O = L-glutaminyl-tRNA(Gln) + L-glutamate + ADP + phosphate + H(+). It carries out the reaction L-aspartyl-tRNA(Asn) + L-glutamine + ATP + H2O = L-asparaginyl-tRNA(Asn) + L-glutamate + ADP + phosphate + 2 H(+). Its function is as follows. Allows the formation of correctly charged Asn-tRNA(Asn) or Gln-tRNA(Gln) through the transamidation of misacylated Asp-tRNA(Asn) or Glu-tRNA(Gln) in organisms which lack either or both of asparaginyl-tRNA or glutaminyl-tRNA synthetases. The reaction takes place in the presence of glutamine and ATP through an activated phospho-Asp-tRNA(Asn) or phospho-Glu-tRNA(Gln). The polypeptide is Aspartyl/glutamyl-tRNA(Asn/Gln) amidotransferase subunit C (Methylorubrum populi (strain ATCC BAA-705 / NCIMB 13946 / BJ001) (Methylobacterium populi)).